A 196-amino-acid polypeptide reads, in one-letter code: Large ribosomal subunit protein mL66 (196 aa).

A mitochondrion-targeting transit peptide spans M1 to G34.

The protein belongs to the bacterial ribosomal protein bS18 family. Mitochondrion-specific ribosomal protein mL66 subfamily. As to quaternary structure, component of the mitochondrial ribosome small subunit (28S) which comprises a 12S rRNA and about 30 distinct proteins.

It localises to the mitochondrion. The polypeptide is Large ribosomal subunit protein mL66 (MRPS18A) (Bos taurus (Bovine)).